Here is a 147-residue protein sequence, read N- to C-terminus: Hemoglobin subunit beta (147 aa).

At valine 2 the chain carries N-acetylvaline. Positions 3–147 (HLSAEEKGLV…VATALAHKYH (145 aa)) constitute a Globin domain. The residue at position 13 (threonine 13) is a Phosphothreonine. Serine 45 bears the Phosphoserine mark. Position 60 is an N6-acetyllysine (lysine 60). Histidine 64 contributes to the heme b binding site. Position 83 is an N6-acetyllysine (lysine 83). Residue histidine 93 coordinates heme b. Cysteine 94 carries the post-translational modification S-nitrosocysteine. At lysine 145 the chain carries N6-acetyllysine.

It belongs to the globin family. In terms of assembly, heterotetramer of two alpha chains and two beta chains. Red blood cells.

Functionally, involved in oxygen transport from the lung to the various peripheral tissues. This Scapanus orarius (Coast mole) protein is Hemoglobin subunit beta (HBB).